Consider the following 440-residue polypeptide: Glycerophosphocholine cholinephosphodiesterase ENPP6 (440 aa).

A signal peptide spans 1–22 (MAVKLGTLLLALALGLAQPASA). Substrate is bound by residues Asp32, Ser71, and Asn92. Zn(2+) contacts are provided by Asp32 and Ser71. The Nucleophile role is filled by Ser71. Ser71 carries the phosphoserine modification. N-linked (GlcNAc...) asparagine glycosylation is found at Asn100 and Asn118. Residues Cys142 and Cys154 are joined by a disulfide bond. Asp193 contacts substrate. Residues Asp193, His197, Asp240, and His241 each contribute to the Zn(2+) site. His241 lines the substrate pocket. An N-linked (GlcNAc...) asparagine glycan is attached at Asn341. His354 is a substrate binding site. Residue His354 coordinates Zn(2+). A glycan (N-linked (GlcNAc...) asparagine) is linked at Asn404. A lipid anchor (GPI-anchor amidated alanine) is attached at Ala418. Positions 419 to 440 (GTTPPVQPSHCALALILLFLLA) are cleaved as a propeptide — removed in mature form.

It belongs to the nucleotide pyrophosphatase/phosphodiesterase family. Homodimer; disulfide-linked. Homotetramer. Zn(2+) serves as cofactor.

The protein resides in the cell membrane. The enzyme catalyses sn-glycerol 3-phosphocholine + H2O = phosphocholine + glycerol + H(+). The catalysed reaction is a 1-acyl-sn-glycero-3-phosphocholine + H2O = a 1-acyl-sn-glycerol + phosphocholine + H(+). It catalyses the reaction a 1-O-alkyl-sn-glycero-3-phosphocholine + H2O = a 1-O-alkyl-sn-glycerol + phosphocholine + H(+). It carries out the reaction 1-dodecanoyl-sn-glycero-3-phosphocholine + H2O = 1-dodecanoyl-sn-glycerol + phosphocholine + H(+). The enzyme catalyses 1-hexadecanoyl-sn-glycero-3-phosphocholine + H2O = 1-hexadecanoyl-sn-glycerol + phosphocholine + H(+). The catalysed reaction is 1-(5Z,8Z,11Z,14Z-eicosatetraenoyl)-sn-glycero-3-phosphocholine + H2O = 1-(5Z,8Z,11Z,14Z-eicosatetraenoyl)-sn-glycerol + phosphocholine + H(+). It catalyses the reaction 1-tetradecanoyl-sn-glycero-3-phosphocholine + H2O = 1-tetradecanoyl-sn-glycerol + phosphocholine + H(+). It carries out the reaction sphing-4-enine-phosphocholine + H2O = sphing-4-enine + phosphocholine + H(+). The enzyme catalyses 1-(9Z-octadecenoyl)-sn-glycero-3-phosphocholine + H2O = 1-(9Z-octadecenoyl)-sn-glycerol + phosphocholine + H(+). The catalysed reaction is 1-(9Z,12Z)-octadecadienoyl-sn-glycero-3-phosphocholine + H2O = 1-(9Z,12Z-octadecadienoyl)-sn-glycerol + phosphocholine + H(+). It catalyses the reaction glycero-2-phosphocholine + H2O = phosphocholine + glycerol + H(+). With respect to regulation, inhibited by EDTA and EGTA in vitro. Its function is as follows. Choline-specific glycerophosphodiesterase that hydrolyzes glycerophosphocholine (GPC) and lysophosphatidylcholine (LPC) and contributes to supplying choline to the cells. Has a preference for LPC with short (12:0 and 14:0) or polyunsaturated (18:2 and 20:4) fatty acids. In vitro, hydrolyzes only choline-containing lysophospholipids, such as sphingosylphosphorylcholine (SPC), platelet-activating factor (PAF) and lysoPAF, but not other lysophospholipids. This Pongo abelii (Sumatran orangutan) protein is Glycerophosphocholine cholinephosphodiesterase ENPP6.